The sequence spans 198 residues: Ribosome maturation factor RimP (198 aa).

It belongs to the RimP family.

It is found in the cytoplasm. Required for maturation of 30S ribosomal subunits. This chain is Ribosome maturation factor RimP, found in Rhizobium rhizogenes (strain K84 / ATCC BAA-868) (Agrobacterium radiobacter).